The chain runs to 206 residues: Peroxynitrite isomerase (206 aa).

Residues 21-27 (GTWEGNG) carry the GXWXGXG motif. Residue His-190 coordinates heme b.

It belongs to the nitrobindin family. Homodimer. Heme b serves as cofactor.

It carries out the reaction peroxynitrite = nitrate. It participates in nitrogen metabolism. Heme-binding protein able to scavenge peroxynitrite and to protect free L-tyrosine against peroxynitrite-mediated nitration, by acting as a peroxynitrite isomerase that converts peroxynitrite to nitrate. Therefore, this protein likely plays a role in peroxynitrite sensing and in the detoxification of reactive nitrogen and oxygen species (RNS and ROS, respectively). Is able to bind nitric oxide (NO) in vitro, but may act as a sensor of peroxynitrite levels in vivo. The polypeptide is Peroxynitrite isomerase (Kocuria rhizophila (strain ATCC 9341 / DSM 348 / NBRC 103217 / DC2201)).